The sequence spans 202 residues: Glycerol-3-phosphate acyltransferase (202 aa).

5 consecutive transmembrane segments (helical) span residues 6–26 (LTLG…AVLV), 56–76 (SAAL…YIAF), 82–102 (SVSL…PIFF), 118–138 (APIG…MVLI), and 141–161 (YSSL…WYLD).

This sequence belongs to the PlsY family. In terms of assembly, probably interacts with PlsX.

Its subcellular location is the cell inner membrane. The catalysed reaction is an acyl phosphate + sn-glycerol 3-phosphate = a 1-acyl-sn-glycero-3-phosphate + phosphate. It functions in the pathway lipid metabolism; phospholipid metabolism. Its function is as follows. Catalyzes the transfer of an acyl group from acyl-phosphate (acyl-PO(4)) to glycerol-3-phosphate (G3P) to form lysophosphatidic acid (LPA). This enzyme utilizes acyl-phosphate as fatty acyl donor, but not acyl-CoA or acyl-ACP. In Shewanella woodyi (strain ATCC 51908 / MS32), this protein is Glycerol-3-phosphate acyltransferase.